The chain runs to 494 residues: Glutamyl-tRNA(Gln) amidotransferase subunit A (494 aa).

Residues K80 and S160 each act as charge relay system in the active site. The interval 140 to 168 is disordered; sequence GNVISPWRRPGDTAPLAPGGSSGGSSSAV. The active-site Acyl-ester intermediate is the S184.

Belongs to the amidase family. GatA subfamily. In terms of assembly, heterotrimer of A, B and C subunits.

The enzyme catalyses L-glutamyl-tRNA(Gln) + L-glutamine + ATP + H2O = L-glutaminyl-tRNA(Gln) + L-glutamate + ADP + phosphate + H(+). Allows the formation of correctly charged Gln-tRNA(Gln) through the transamidation of misacylated Glu-tRNA(Gln) in organisms which lack glutaminyl-tRNA synthetase. The reaction takes place in the presence of glutamine and ATP through an activated gamma-phospho-Glu-tRNA(Gln). The polypeptide is Glutamyl-tRNA(Gln) amidotransferase subunit A (Novosphingobium aromaticivorans (strain ATCC 700278 / DSM 12444 / CCUG 56034 / CIP 105152 / NBRC 16084 / F199)).